The sequence spans 450 residues: Allergen Fus c 3 (450 aa).

4 disordered regions span residues 18-87 (EPEM…SRAQ), 99-148 (DLHA…HLPP), 185-377 (SGHP…NLVE), and 398-426 (QIRH…RRVS). A compositionally biased stretch (polar residues) spans 31–46 (PHQQPISSPNRTSRNT). Over residues 101-112 (HAPSHPSHLSHG) the composition is skewed to low complexity. Positions 113–125 (APHEQEHAHEIQR) are enriched in basic and acidic residues. Residues 272–286 (RPRKPARARRQKKEP) show a composition bias toward basic residues. Residues 291-304 (DASQGARSSSTGGT) show a composition bias toward polar residues. The span at 305–341 (AHSVSDAASPSSTSHQSRASLTSKSASMTSAASTASS) shows a compositional bias: low complexity. Residues 356–377 (TLDKPNDTAEDRRTRASHNLVE) show a composition bias toward basic and acidic residues. Positions 368–441 (RTRASHNLVE…EMARRHIEAL (74 aa)) constitute a bHLH domain.

The sequence is that of Allergen Fus c 3 from Fusarium culmorum.